We begin with the raw amino-acid sequence, 322 residues long: MSESAEHLKDEGSKTQSMIAGATAGLIARFVIAPLDVVKIRLQLQSHSASDPLSQRDLRGSPIYKGTIPTIKRIFREEGLAALWKGNVPAELMYVSYSAIQFTTYRSVTLGLQDAFGEHRLPAAAESFIAGASAGAVATTATYPLDLLRTRFAAQGIERVYTSLRSSIRDIAISEGPRGFFQGLGAGVGQIVPYMGIFFATYESLRLPMGTLNMPFGSADASAGVIASVIAKTGIFPFDLIRKRLQVQGPTRERYVHKNIPVYNGVFQTMRHILHNEGYRGLYRGLTVSLFKSAPASAVTMWTYERVLGILLKWEKSQELSK.

3 Solcar repeats span residues 12–111, 122–208, and 215–310; these read GSKT…VTLG, PAAA…LRLP, and PFGS…VLGI. 6 helical membrane passes run 18–38, 92–108, 128–148, 180–200, 221–241, and 285–302; these read MIAG…LDVV, LMYV…YRSV, FIAG…LDLL, FFQG…IFFA, ASAG…FDLI, and GLTV…VTMW.

This sequence belongs to the mitochondrial carrier (TC 2.A.29) family.

The protein resides in the mitochondrion inner membrane. Functionally, mitochondrial transporter that mediates uptake of thiamine pyrophosphate (ThPP) into mitochondria. This chain is Mitochondrial thiamine pyrophosphate carrier 1 (tpc1), found in Botryotinia fuckeliana (strain B05.10) (Noble rot fungus).